The primary structure comprises 429 residues: Ribosomal RNA small subunit methyltransferase B (429 aa).

S-adenosyl-L-methionine is bound by residues 254 to 260 (CAAPGGK), D277, D303, and D322. C375 (nucleophile) is an active-site residue. Positions 397–419 (ALSETGTPDQPGQQNLPGGEEGD) are disordered. Positions 400–412 (ETGTPDQPGQQNL) are enriched in polar residues.

This sequence belongs to the class I-like SAM-binding methyltransferase superfamily. RsmB/NOP family.

The protein resides in the cytoplasm. It catalyses the reaction cytidine(967) in 16S rRNA + S-adenosyl-L-methionine = 5-methylcytidine(967) in 16S rRNA + S-adenosyl-L-homocysteine + H(+). Functionally, specifically methylates the cytosine at position 967 (m5C967) of 16S rRNA. In Salmonella choleraesuis (strain SC-B67), this protein is Ribosomal RNA small subunit methyltransferase B.